Here is a 601-residue protein sequence, read N- to C-terminus: Ribosomal oxygenase 1 (601 aa).

Basic and acidic residues predominate over residues 1–11 (MAACGAEERQR). Residues 1–149 (MAACGAEERQ…PGGGGVPGLL (149 aa)) are disordered. Over residues 61-70 (ERAAPPQGAA) the composition is skewed to low complexity. Basic and acidic residues predominate over residues 73–87 (DRVERAGSSEAKQGD). In terms of domain architecture, JmjC spans 254-399 (CSLRLLSPQA…DFLEKLLPAA (146 aa)). His-300, Asp-302, and His-365 together coordinate Fe cation.

This sequence belongs to the ROX family. NO66 subfamily. Fe(2+) serves as cofactor.

It localises to the nucleus. The protein localises to the nucleolus. Its subcellular location is the nucleoplasm. The enzyme catalyses N(6),N(6)-dimethyl-L-lysyl(36)-[histone H3] + 2 2-oxoglutarate + 2 O2 = L-lysyl(36)-[histone H3] + 2 formaldehyde + 2 succinate + 2 CO2. The catalysed reaction is N(6)-methyl-L-lysyl-[protein] + 2-oxoglutarate + O2 = L-lysyl-[protein] + formaldehyde + succinate + CO2. It catalyses the reaction L-histidyl-[protein] + 2-oxoglutarate + O2 = (3S)-3-hydroxy-L-histidyl-[protein] + succinate + CO2. Oxygenase that can act as both a histone lysine demethylase and a ribosomal histidine hydroxylase. Specifically demethylates 'Lys-4' (H3K4me) and 'Lys-36' (H3K36me) of histone H3, thereby playing a central role in histone code. Preferentially demethylates trimethylated H3 'Lys-4' (H3K4me3) and monomethylated H3 'Lys-4' (H3K4me1) residues, while it has weaker activity for dimethylated H3 'Lys-36' (H3K36me2). Also catalyzes demethylation of non-histone proteins. Also catalyzes the hydroxylation of 60S ribosomal protein L8 on 'His-216', thereby playing a role in ribosome biogenesis. In Gallus gallus (Chicken), this protein is Ribosomal oxygenase 1 (RIOX1).